The chain runs to 429 residues: Ribosomal RNA small subunit methyltransferase B (429 aa).

S-adenosyl-L-methionine is bound by residues 254–260, Asp-277, Asp-303, and Asp-322; that span reads CAAPGGK. The Nucleophile role is filled by Cys-375.

The protein belongs to the class I-like SAM-binding methyltransferase superfamily. RsmB/NOP family.

The protein localises to the cytoplasm. The catalysed reaction is cytidine(967) in 16S rRNA + S-adenosyl-L-methionine = 5-methylcytidine(967) in 16S rRNA + S-adenosyl-L-homocysteine + H(+). Functionally, specifically methylates the cytosine at position 967 (m5C967) of 16S rRNA. This Photorhabdus laumondii subsp. laumondii (strain DSM 15139 / CIP 105565 / TT01) (Photorhabdus luminescens subsp. laumondii) protein is Ribosomal RNA small subunit methyltransferase B.